Here is a 95-residue protein sequence, read N- to C-terminus: Small ribosomal subunit protein uS19 (95 aa).

It belongs to the universal ribosomal protein uS19 family.

Functionally, protein S19 forms a complex with S13 that binds strongly to the 16S ribosomal RNA. The chain is Small ribosomal subunit protein uS19 from Coxiella burnetii (strain CbuK_Q154) (Coxiella burnetii (strain Q154)).